The primary structure comprises 112 residues: MYB-like transcription factor ETC2 (112 aa).

The 38-residue stretch at 41–78 folds into the Myb-like domain; that stretch reads TEQEEDLISRMYRLVGNRWDLIAGRVVGRKANEIERYW.

Interacts with GL3. Expressed in stomatal guard mother cells, young stomata and trichomes of young leaves, and inflorescences.

It is found in the nucleus. Functionally, MYB-type transcription factor involved in epidermal cell fate specification. Acts as a negative regulator of trichome development, by mediating lateral inhibition. Promotes the formation of hair developing cells in H position in root epidermis, probably by inhibiting non-hair cell formation. The chain is MYB-like transcription factor ETC2 (ETC2) from Arabidopsis thaliana (Mouse-ear cress).